The sequence spans 363 residues: Replication factor C subunit 4 (363 aa).

N-acetylmethionine is present on methionine 1. The interval 1–36 (MQAFLKGTSISTKPPLTKDRGVAASAGSSGENKKAK) is disordered. N6-acetyllysine is present on residues lysine 6 and lysine 13. 78 to 85 (GPPGTGKT) contributes to the ATP binding site.

Belongs to the activator 1 small subunits family. Subunit of the RFC complex, an heteropentameric complex consisting of a large subunit RFC1 and four small subunits RFC2, RFC3, RFC4 and RFC5; the RFC complex interacts with PCNA. Forms an heterotetrameric complex with RFC2, RFC3 and RFC5; this complex has ATPase activity but is not stimulated by PCNA. The heterotetramer of subunits RFC2, RFC3, RFC4 and RFC5 interacts with RAD17. Interacts with ATAD5. Interacts with CTF18. Interacts with CNTD1; this interaction facilitates crossover formation.

The protein resides in the nucleus. In terms of biological role, subunit of the replication factor C (RFC) complex which acts during elongation of primed DNA templates by DNA polymerases delta and epsilon, and is necessary for ATP-dependent loading of proliferating cell nuclear antigen (PCNA) onto primed DNA. The RFC4 subunit probably functions as a scaffold on which the other complex components can assemble. The protein is Replication factor C subunit 4 (RFC4) of Homo sapiens (Human).